A 169-amino-acid polypeptide reads, in one-letter code: MFTSAHANRSAQASASAGHYAHRSGEQTANGLISEIVYREDQPMMTQLLLLPLLQQLGQQSRWQLWLTPQQKLSREWVQSAGLPLSKVMQISQLSPCHTVDSMIRALRTGNYSVVICWLTEELTAEEHERLVNAAQEGCAMGFIMRPVRNQGTLGRQLSGLKIHSNLYH.

Positions 1 to 15 (MFTSAHANRSAQASA) are enriched in polar residues. The tract at residues 1-22 (MFTSAHANRSAQASASAGHYAH) is disordered. Residues 106-112 (ALRTGNY) are ftsZ binding. The tract at residues 162 to 169 (KIHSNLYH) is lon protease binding.

Belongs to the SulA family. As to quaternary structure, interacts with FtsZ. Post-translationally, is rapidly cleaved and degraded by the Lon protease once DNA damage is repaired.

Its function is as follows. Component of the SOS system and an inhibitor of cell division. Accumulation of SulA causes rapid cessation of cell division and the appearance of long, non-septate filaments. In the presence of GTP, binds a polymerization-competent form of FtsZ in a 1:1 ratio, thus inhibiting FtsZ polymerization and therefore preventing it from participating in the assembly of the Z ring. This mechanism prevents the premature segregation of damaged DNA to daughter cells during cell division. This Klebsiella pneumoniae (strain 342) protein is Cell division inhibitor SulA.